A 265-amino-acid polypeptide reads, in one-letter code: 5'-nucleotidase SurE (265 aa).

Positions 8, 9, 39, and 96 each coordinate a divalent metal cation.

It belongs to the SurE nucleotidase family. Requires a divalent metal cation as cofactor.

It is found in the cytoplasm. The catalysed reaction is a ribonucleoside 5'-phosphate + H2O = a ribonucleoside + phosphate. Its function is as follows. Nucleotidase that shows phosphatase activity on nucleoside 5'-monophosphates. The chain is 5'-nucleotidase SurE from Dehalococcoides mccartyi (strain ATCC BAA-2266 / KCTC 15142 / 195) (Dehalococcoides ethenogenes (strain 195)).